The sequence spans 68 residues: Probable tautomerase jhp_0858 (68 aa).

Pro-2 serves as the catalytic Proton acceptor; via imino nitrogen.

It belongs to the 4-oxalocrotonate tautomerase family.

In Helicobacter pylori (strain J99 / ATCC 700824) (Campylobacter pylori J99), this protein is Probable tautomerase jhp_0858.